Here is a 72-residue protein sequence, read N- to C-terminus: DNA-directed RNA polymerase subunit omega (72 aa).

It belongs to the RNA polymerase subunit omega family. The RNAP catalytic core consists of 2 alpha, 1 beta, 1 beta' and 1 omega subunit. When a sigma factor is associated with the core the holoenzyme is formed, which can initiate transcription.

It carries out the reaction RNA(n) + a ribonucleoside 5'-triphosphate = RNA(n+1) + diphosphate. Promotes RNA polymerase assembly. Latches the N- and C-terminal regions of the beta' subunit thereby facilitating its interaction with the beta and alpha subunits. The sequence is that of DNA-directed RNA polymerase subunit omega from Clostridium botulinum (strain Langeland / NCTC 10281 / Type F).